Consider the following 184-residue polypeptide: V-type proton ATPase subunit E (184 aa).

Belongs to the V-ATPase E subunit family.

Its function is as follows. Produces ATP from ADP in the presence of a proton gradient across the membrane. This is V-type proton ATPase subunit E from Finegoldia magna (strain ATCC 29328 / DSM 20472 / WAL 2508) (Peptostreptococcus magnus).